Consider the following 215-residue polypeptide: Cytochrome b6 (215 aa).

The helical transmembrane segment at 32–52 (IFYCLGGITLVCFLIQFATGF) threads the bilayer. Position 35 (cysteine 35) interacts with heme c. Residues histidine 86 and histidine 100 each coordinate heme b. Helical transmembrane passes span 90–110 (ASMM…TGGF), 116–136 (LTWV…VTGY), and 186–206 (LHTF…FLMI). 2 residues coordinate heme b: histidine 187 and histidine 202.

This sequence belongs to the cytochrome b family. PetB subfamily. The 4 large subunits of the cytochrome b6-f complex are cytochrome b6, subunit IV (17 kDa polypeptide, PetD), cytochrome f and the Rieske protein, while the 4 small subunits are PetG, PetL, PetM and PetN. The complex functions as a dimer. Requires heme b as cofactor. Heme c serves as cofactor.

Its subcellular location is the cellular thylakoid membrane. Component of the cytochrome b6-f complex, which mediates electron transfer between photosystem II (PSII) and photosystem I (PSI), cyclic electron flow around PSI, and state transitions. The polypeptide is Cytochrome b6 (Synechococcus sp. (strain JA-3-3Ab) (Cyanobacteria bacterium Yellowstone A-Prime)).